The primary structure comprises 159 residues: Ribosome maturation factor RimP (159 aa).

This sequence belongs to the RimP family.

It is found in the cytoplasm. Functionally, required for maturation of 30S ribosomal subunits. This is Ribosome maturation factor RimP from Trichlorobacter lovleyi (strain ATCC BAA-1151 / DSM 17278 / SZ) (Geobacter lovleyi).